We begin with the raw amino-acid sequence, 267 residues long: tRNA-cytidine(32) 2-sulfurtransferase 2 (267 aa).

The PP-loop motif signature appears at 42–47 (SGGKDS). 3 residues coordinate [4Fe-4S] cluster: Cys117, Cys120, and Cys208.

The protein belongs to the TtcA family. As to quaternary structure, homodimer. The cofactor is Mg(2+). [4Fe-4S] cluster serves as cofactor.

It localises to the cytoplasm. The enzyme catalyses cytidine(32) in tRNA + S-sulfanyl-L-cysteinyl-[cysteine desulfurase] + AH2 + ATP = 2-thiocytidine(32) in tRNA + L-cysteinyl-[cysteine desulfurase] + A + AMP + diphosphate + H(+). The protein operates within tRNA modification. Functionally, catalyzes the ATP-dependent 2-thiolation of cytidine in position 32 of tRNA, to form 2-thiocytidine (s(2)C32). The sulfur atoms are provided by the cysteine/cysteine desulfurase (IscS) system. The polypeptide is tRNA-cytidine(32) 2-sulfurtransferase 2 (Francisella tularensis subsp. holarctica (strain FTNF002-00 / FTA)).